Reading from the N-terminus, the 380-residue chain is Glucose-1-phosphate adenylyltransferase (380 aa).

Residues Tyr-100, Gly-165, 180-181, and Ser-191 each bind alpha-D-glucose 1-phosphate; that span reads EK.

Belongs to the bacterial/plant glucose-1-phosphate adenylyltransferase family. As to quaternary structure, homotetramer.

It carries out the reaction alpha-D-glucose 1-phosphate + ATP + H(+) = ADP-alpha-D-glucose + diphosphate. It participates in glycan biosynthesis; glycogen biosynthesis. Involved in the biosynthesis of ADP-glucose, a building block required for the elongation reactions to produce glycogen. Catalyzes the reaction between ATP and alpha-D-glucose 1-phosphate (G1P) to produce pyrophosphate and ADP-Glc. This Clostridium acetobutylicum (strain ATCC 824 / DSM 792 / JCM 1419 / IAM 19013 / LMG 5710 / NBRC 13948 / NRRL B-527 / VKM B-1787 / 2291 / W) protein is Glucose-1-phosphate adenylyltransferase.